Here is a 479-residue protein sequence, read N- to C-terminus: Glycogen synthase (479 aa).

Position 15 (K15) interacts with ADP-alpha-D-glucose.

The protein belongs to the glycosyltransferase 1 family. Bacterial/plant glycogen synthase subfamily.

It catalyses the reaction [(1-&gt;4)-alpha-D-glucosyl](n) + ADP-alpha-D-glucose = [(1-&gt;4)-alpha-D-glucosyl](n+1) + ADP + H(+). It participates in glycan biosynthesis; glycogen biosynthesis. Synthesizes alpha-1,4-glucan chains using ADP-glucose. In Acidiphilium cryptum (strain JF-5), this protein is Glycogen synthase.